The chain runs to 2614 residues: Talin-B (2614 aa).

The 285-residue stretch at 85–369 folds into the FERM domain; the sequence is RPLKVRLMDE…GYIEILMKKR (285 aa). The tract at residues 393–421 is disordered; sequence RGQTSQATTSSSLSGYDGNGGREGQYSAP. Over residues 395–406 the composition is skewed to low complexity; sequence QTSQATTSSSLS. Coiled-coil stretches lie at residues 1938-1965 and 2033-2057; these read TQNI…ASGK and NKAI…LVQS. Residues 2219 to 2460 enclose the I/LWEQ domain; it reads LLFAAGESLE…SIRKKEYSDQ (242 aa). The segment at 2454 to 2557 is disordered; it reads KKEYSDQTGN…AAPTAAAPNK (104 aa). Over residues 2473 to 2487 the composition is skewed to polar residues; that stretch reads KPTTSISVGITPTKR. Over residues 2517–2537 the composition is skewed to low complexity; the sequence is KKPAPSQAPSSPVAPVSAPVS. The segment covering 2538 to 2548 has biased composition (pro residues); sequence KPSPKPAPKPA. Residues 2553–2614 form the HP domain; that stretch reads AAPNKTYTLE…NNIKTKLGLF (62 aa).

The protein localises to the cytoplasm. It localises to the cytoskeleton. It is found in the cell cortex. Actin-binding protein required for multicellular morphogenesis. Substrate of pkgB and/or pkbA. This Dictyostelium discoideum (Social amoeba) protein is Talin-B (talB).